A 141-amino-acid polypeptide reads, in one-letter code: Nucleoside diphosphate kinase (141 aa).

The ATP site is built by Lys-11, Phe-59, Arg-87, Thr-93, Arg-104, and Asn-114. His-117 acts as the Pros-phosphohistidine intermediate in catalysis.

The protein belongs to the NDK family. Homotetramer. It depends on Mg(2+) as a cofactor.

It is found in the cytoplasm. The enzyme catalyses a 2'-deoxyribonucleoside 5'-diphosphate + ATP = a 2'-deoxyribonucleoside 5'-triphosphate + ADP. It catalyses the reaction a ribonucleoside 5'-diphosphate + ATP = a ribonucleoside 5'-triphosphate + ADP. Functionally, major role in the synthesis of nucleoside triphosphates other than ATP. The ATP gamma phosphate is transferred to the NDP beta phosphate via a ping-pong mechanism, using a phosphorylated active-site intermediate. In Legionella pneumophila (strain Paris), this protein is Nucleoside diphosphate kinase.